The chain runs to 194 residues: Fibroblast growth factor 7 (194 aa).

The first 31 residues, 1–31, serve as a signal peptide directing secretion; the sequence is MRKWILTWILPSLLYRSCFHIICLVGTISLA. An N-linked (GlcNAc...) asparagine glycan is attached at N45.

Belongs to the heparin-binding growth factors family. In terms of assembly, interacts with FGFBP1. Interacts with FGFR2. Affinity between fibroblast growth factors (FGFs) and their receptors is increased by heparan sulfate glycosaminoglycans that function as coreceptors.

In terms of biological role, plays an important role in the regulation of embryonic development, cell proliferation and cell differentiation. Required for normal branching morphogenesis. Growth factor active on keratinocytes. Possible major paracrine effector of normal epithelial cell proliferation. The chain is Fibroblast growth factor 7 (FGF7) from Ovis aries (Sheep).